A 398-amino-acid chain; its full sequence is Glutamyl-tRNA reductase (398 aa).

Residues 45–48, serine 88, 93–95, and glutamine 99 each bind substrate; these read TCNR and EDQ. Cysteine 46 acts as the Nucleophile in catalysis. 168–173 serves as a coordination point for NADP(+); that stretch reads GAGKMG.

This sequence belongs to the glutamyl-tRNA reductase family. In terms of assembly, homodimer.

The catalysed reaction is (S)-4-amino-5-oxopentanoate + tRNA(Glu) + NADP(+) = L-glutamyl-tRNA(Glu) + NADPH + H(+). Its pathway is porphyrin-containing compound metabolism; protoporphyrin-IX biosynthesis; 5-aminolevulinate from L-glutamyl-tRNA(Glu): step 1/2. Catalyzes the NADPH-dependent reduction of glutamyl-tRNA(Glu) to glutamate 1-semialdehyde (GSA). The sequence is that of Glutamyl-tRNA reductase (hemA) from Methanothermobacter marburgensis (strain ATCC BAA-927 / DSM 2133 / JCM 14651 / NBRC 100331 / OCM 82 / Marburg) (Methanobacterium thermoautotrophicum).